The sequence spans 130 residues: Large ribosomal subunit protein bL19 (130 aa).

It belongs to the bacterial ribosomal protein bL19 family.

Functionally, this protein is located at the 30S-50S ribosomal subunit interface and may play a role in the structure and function of the aminoacyl-tRNA binding site. This is Large ribosomal subunit protein bL19 from Cupriavidus metallidurans (strain ATCC 43123 / DSM 2839 / NBRC 102507 / CH34) (Ralstonia metallidurans).